The sequence spans 432 residues: Amino-acid acetyltransferase (432 aa).

One can recognise an N-acetyltransferase domain in the interval 286–425; it reads ERVREAAIED…ASLYNYQRNS (140 aa).

This sequence belongs to the acetyltransferase family. ArgA subfamily.

Its subcellular location is the cytoplasm. The catalysed reaction is L-glutamate + acetyl-CoA = N-acetyl-L-glutamate + CoA + H(+). Its pathway is amino-acid biosynthesis; L-arginine biosynthesis; N(2)-acetyl-L-ornithine from L-glutamate: step 1/4. The polypeptide is Amino-acid acetyltransferase (Pseudomonas fluorescens (strain ATCC BAA-477 / NRRL B-23932 / Pf-5)).